The primary structure comprises 145 residues: Large ribosomal subunit protein uL13 (145 aa).

This sequence belongs to the universal ribosomal protein uL13 family. As to quaternary structure, part of the 50S ribosomal subunit.

In terms of biological role, this protein is one of the early assembly proteins of the 50S ribosomal subunit, although it is not seen to bind rRNA by itself. It is important during the early stages of 50S assembly. The chain is Large ribosomal subunit protein uL13 from Staphylococcus saprophyticus subsp. saprophyticus (strain ATCC 15305 / DSM 20229 / NCIMB 8711 / NCTC 7292 / S-41).